Here is an 802-residue protein sequence, read N- to C-terminus: Nuclear polyadenylated RNA-binding protein 3 (802 aa).

2 disordered regions span residues 1–174 (MSDE…RRET) and 252–293 (ALSV…RMRF). A compositionally biased stretch (low complexity) spans 22-34 (SNSNENELMNNSS). The span at 37-73 (DGIEFDAPEEEREAEREEENEEQHELEDVNDEEEEDK) shows a compositional bias: acidic residues. Residue threonine 86 is modified to Phosphothreonine. 2 stretches are compositionally biased toward acidic residues: residues 101-139 (DDDD…EEGN) and 149-158 (AAEDGEDEED). Over residues 159–174 (KKDKTKDKEVELRRET) the composition is skewed to basic and acidic residues. Residues 260–276 (STISTTASASATSGARS) show a composition bias toward low complexity. Residues 277–293 (NDQRKPPLSDAQRRMRF) are compositionally biased toward basic and acidic residues. Positions 330–401 (SRLFIGNLPL…KKLILEVSSS (72 aa)) constitute an RRM domain. Threonine 451 carries the post-translational modification Phosphothreonine. 2 disordered regions span residues 571-675 (IYGA…PMDQ) and 717-802 (MQGQ…KLQK). The span at 575 to 590 (PPLPVPNGPAVGPPPQ) shows a compositional bias: pro residues. Positions 593–614 (YYQGYSMPPPQQQQQQPYGNYG) are enriched in low complexity. Residues 632–642 (MNQSYGRYQTS) are compositionally biased toward polar residues. Low complexity-rich tracts occupy residues 651 to 661 (QIPQGYGRYQA) and 717 to 738 (MQGQ…MNSS). Over residues 745–754 (TNYNGQNISA) the composition is skewed to polar residues. Positions 757 to 769 (SAPPMSHQPPPPQ) are enriched in pro residues. Residues 770-785 (QQQQQQQQQQQQQQQP) are compositionally biased toward low complexity.

Its subcellular location is the nucleus. It is found in the nucleoplasm. Functionally, may be required for packaging pre-mRNAs into ribonucleoprotein structures amenable to efficient nuclear RNA processing. Binds to poly(A)+ RNA. Appears to act in the maintenance of CLN3 mRNA levels. The protein is Nuclear polyadenylated RNA-binding protein 3 (NAB3) of Saccharomyces cerevisiae (strain ATCC 204508 / S288c) (Baker's yeast).